The following is a 443-amino-acid chain: Na(+)-translocating NADH-quinone reductase subunit A (443 aa).

This sequence belongs to the NqrA family. As to quaternary structure, composed of six subunits; NqrA, NqrB, NqrC, NqrD, NqrE and NqrF.

It catalyses the reaction a ubiquinone + n Na(+)(in) + NADH + H(+) = a ubiquinol + n Na(+)(out) + NAD(+). In terms of biological role, NQR complex catalyzes the reduction of ubiquinone-1 to ubiquinol by two successive reactions, coupled with the transport of Na(+) ions from the cytoplasm to the periplasm. NqrA to NqrE are probably involved in the second step, the conversion of ubisemiquinone to ubiquinol. This Mannheimia succiniciproducens (strain KCTC 0769BP / MBEL55E) protein is Na(+)-translocating NADH-quinone reductase subunit A.